The following is a 556-amino-acid chain: Formate--tetrahydrofolate ligase (556 aa).

65-72 (TPAGEGKS) contributes to the ATP binding site.

It belongs to the formate--tetrahydrofolate ligase family.

It carries out the reaction (6S)-5,6,7,8-tetrahydrofolate + formate + ATP = (6R)-10-formyltetrahydrofolate + ADP + phosphate. It functions in the pathway one-carbon metabolism; tetrahydrofolate interconversion. This chain is Formate--tetrahydrofolate ligase, found in Streptococcus pneumoniae (strain 70585).